A 203-amino-acid polypeptide reads, in one-letter code: Endo-type membrane-bound lytic murein transglycosylase A (203 aa).

Residues Met-1 to Gly-15 form the signal peptide. A lipid anchor (N-palmitoyl cysteine) is attached at Cys-16. Cys-16 carries S-diacylglycerol cysteine lipidation.

It belongs to the transglycosylase Slt family.

It is found in the cell outer membrane. The catalysed reaction is Endolytic cleavage of the (1-&gt;4)-beta-glycosidic linkage between N-acetylmuramic acid (MurNAc) and N-acetylglucosamine (GlcNAc) residues in peptidoglycan with concomitant formation of a 1,6-anhydrobond in the MurNAc residue.. In terms of biological role, murein-degrading enzyme. May play a role in recycling of muropeptides during cell elongation and/or cell division. Preferentially cleaves at a distance of more than two disaccharide units from the ends of the glycan chain. This Enterobacter sp. (strain 638) protein is Endo-type membrane-bound lytic murein transglycosylase A.